The following is a 20-amino-acid chain: Toxin b subunit beta (20 aa).

In terms of assembly, toxin b is a heterodimer composed of toxin alpha and toxin beta. Expressed by the venom gland.

The protein localises to the secreted. In terms of biological role, binds to sodium channels (Nav) and affects the channel activation process. This Androctonus crassicauda (Arabian fat-tailed scorpion) protein is Toxin b subunit beta.